Here is an 80-residue protein sequence, read N- to C-terminus: MPKPPLRDKVMKKKICIFCKEKNTQINYKDTTLLRKYVSDRGKIRARRVTGNCVQHQRDVAIAVKNSREVALLPYATVAR.

The protein belongs to the bacterial ribosomal protein bS18 family. In terms of assembly, part of the 30S ribosomal subunit. Forms a tight heterodimer with protein bS6.

Its function is as follows. Binds as a heterodimer with protein bS6 to the central domain of the 16S rRNA, where it helps stabilize the platform of the 30S subunit. This chain is Small ribosomal subunit protein bS18A, found in Rhodococcus jostii (strain RHA1).